The chain runs to 379 residues: Arginine biosynthesis bifunctional protein ArgJ (379 aa).

Residues threonine 141, lysine 163, threonine 174, glutamate 252, asparagine 374, and threonine 379 each coordinate substrate. Residue threonine 174 is the Nucleophile of the active site.

The protein belongs to the ArgJ family. In terms of assembly, heterotetramer of two alpha and two beta chains.

Its subcellular location is the cytoplasm. The enzyme catalyses N(2)-acetyl-L-ornithine + L-glutamate = N-acetyl-L-glutamate + L-ornithine. It carries out the reaction L-glutamate + acetyl-CoA = N-acetyl-L-glutamate + CoA + H(+). It functions in the pathway amino-acid biosynthesis; L-arginine biosynthesis; L-ornithine and N-acetyl-L-glutamate from L-glutamate and N(2)-acetyl-L-ornithine (cyclic): step 1/1. Its pathway is amino-acid biosynthesis; L-arginine biosynthesis; N(2)-acetyl-L-ornithine from L-glutamate: step 1/4. Functionally, catalyzes two activities which are involved in the cyclic version of arginine biosynthesis: the synthesis of N-acetylglutamate from glutamate and acetyl-CoA as the acetyl donor, and of ornithine by transacetylation between N(2)-acetylornithine and glutamate. This chain is Arginine biosynthesis bifunctional protein ArgJ, found in Aquifex aeolicus (strain VF5).